The chain runs to 63 residues: Beta-defensin 38 (63 aa).

Residues 1–21 (MKISCFLLLVLSLYLFQVNQA) form the signal peptide. Cystine bridges form between Cys29-Cys58, Cys36-Cys51, and Cys41-Cys59.

Belongs to the beta-defensin family.

It localises to the secreted. Has antibacterial activity. The sequence is that of Beta-defensin 38 (Defb38) from Rattus norvegicus (Rat).